The primary structure comprises 148 residues: 3-dehydroquinate dehydratase (148 aa).

Residue Tyr-23 is the Proton acceptor of the active site. The substrate site is built by Asn-75, His-81, and Asp-88. The active-site Proton donor is the His-101. Substrate-binding positions include 102-103 and Arg-112; that span reads IS.

Belongs to the type-II 3-dehydroquinase family. As to quaternary structure, homododecamer.

It catalyses the reaction 3-dehydroquinate = 3-dehydroshikimate + H2O. Its pathway is metabolic intermediate biosynthesis; chorismate biosynthesis; chorismate from D-erythrose 4-phosphate and phosphoenolpyruvate: step 3/7. Functionally, catalyzes a trans-dehydration via an enolate intermediate. The polypeptide is 3-dehydroquinate dehydratase (Methylococcus capsulatus (strain ATCC 33009 / NCIMB 11132 / Bath)).